A 55-amino-acid chain; its full sequence is MAKPASIKIRLNSTADTGFFYVTKKNARTKTEKMVLKKYDPVIRKHVEFKEGKIK.

It belongs to the bacterial ribosomal protein bL33 family.

The chain is Large ribosomal subunit protein bL33 from Caulobacter sp. (strain K31).